The following is a 556-amino-acid chain: Arginine--tRNA ligase (556 aa).

The 'HIGH' region motif lies at A132 to H142.

The protein belongs to the class-I aminoacyl-tRNA synthetase family. Monomer.

It is found in the cytoplasm. It carries out the reaction tRNA(Arg) + L-arginine + ATP = L-arginyl-tRNA(Arg) + AMP + diphosphate. This Bacillus licheniformis (strain ATCC 14580 / DSM 13 / JCM 2505 / CCUG 7422 / NBRC 12200 / NCIMB 9375 / NCTC 10341 / NRRL NRS-1264 / Gibson 46) protein is Arginine--tRNA ligase.